A 283-amino-acid chain; its full sequence is Probable replication-associated protein repA1 (283 aa).

This sequence belongs to the IncFII RepA family.

Functionally, this protein is essential for plasmid replication; it is involved in copy control functions. This chain is Probable replication-associated protein repA1 (repA1), found in Buchnera aphidicola subsp. Schizaphis graminum (strain Sg).